The primary structure comprises 182 residues: Adenine phosphoribosyltransferase (182 aa).

It belongs to the purine/pyrimidine phosphoribosyltransferase family. As to quaternary structure, homodimer.

Its subcellular location is the cytoplasm. It catalyses the reaction AMP + diphosphate = 5-phospho-alpha-D-ribose 1-diphosphate + adenine. It functions in the pathway purine metabolism; AMP biosynthesis via salvage pathway; AMP from adenine: step 1/1. In terms of biological role, catalyzes a salvage reaction resulting in the formation of AMP, that is energically less costly than de novo synthesis. The sequence is that of Adenine phosphoribosyltransferase from Campylobacter hominis (strain ATCC BAA-381 / DSM 21671 / CCUG 45161 / LMG 19568 / NCTC 13146 / CH001A).